Here is a 615-residue protein sequence, read N- to C-terminus: Cilia- and flagella-associated protein 52 (615 aa).

WD repeat units follow at residues 54–98 (GHSD…LIHR), 101–142 (LHKV…AICG), 145–184 (CNTNFTNCVKFFNNSPDKLITAGNFNMNVWTYDAGNNKLR), 232–275 (GPAK…AGTK), 320–359 (AHNDKINGMAFPNEYSEVFATCGTGFIRLWHLTTCRELLR), 362–401 (VPNLECFCIAFTTDGSAILSGWSDGKIRAFGPQSGKIIFT), 405–444 (AHQKAVTAIASTADSSRILSGGEEGMVRVWRIGRTSQTLE), 449–488 (DHKGPVNCIRIKGSGDECVSASSDGSCILWDLHTFKRRTS), 490–529 (FANTFFKSVVYHPDESQLVTAGTDRKVTYWDAYDGNAIRI), 533–572 (SDLDEVNALAVDRDGEALVSGGGDKLVKLWGYDEGHCYFV), and 575–614 (AHSGAITAVGVTPDKQRIVSVGTEGGIFIWDYQRPQTLAD).

Belongs to the CFAP52 family.

Its subcellular location is the cytoplasm. It is found in the cell projection. The protein resides in the cilium. It localises to the flagellum. In terms of biological role, may play a role in cell growth and/or survival. This chain is Cilia- and flagella-associated protein 52, found in Chlamydomonas reinhardtii (Chlamydomonas smithii).